A 93-amino-acid chain; its full sequence is uncharacterized protein (93 aa).

Residues 20 to 40 (VYIYLCFSLMTIALICYLIHI) traverse the membrane as a helical segment. An N-linked (GlcNAc...) asparagine; by host glycan is attached at asparagine 78.

This sequence belongs to the asfivirus KP93L family.

It is found in the host membrane. This is an uncharacterized protein from Ornithodoros (relapsing fever ticks).